We begin with the raw amino-acid sequence, 200 residues long: Dephospho-CoA kinase (200 aa).

The region spanning 4-200 (VIGLTGGIAS…AILKKWNIID (197 aa)) is the DPCK domain. An ATP-binding site is contributed by 12–17 (ASGKST).

Belongs to the CoaE family.

Its subcellular location is the cytoplasm. It catalyses the reaction 3'-dephospho-CoA + ATP = ADP + CoA + H(+). It participates in cofactor biosynthesis; coenzyme A biosynthesis; CoA from (R)-pantothenate: step 5/5. Functionally, catalyzes the phosphorylation of the 3'-hydroxyl group of dephosphocoenzyme A to form coenzyme A. In Bacillus thuringiensis subsp. konkukian (strain 97-27), this protein is Dephospho-CoA kinase.